The chain runs to 593 residues: Tectonic-1 (593 aa).

Positions 1-22 (MGSRGLPPLLLVLLNCYTSSST) are cleaved as a signal peptide. Positions 37-72 (KEDLNSTKATPTTLQPSLSPRTPGTPRAPERSGPRP) are disordered. A glycan (N-linked (GlcNAc...) asparagine) is linked at asparagine 41. Polar residues predominate over residues 42–58 (STKATPTTLQPSLSPRT). A glycan (N-linked (GlcNAc...) asparagine) is linked at asparagine 303. Arginine 486 is subject to Omega-N-methylarginine. Asparagine 536 is a glycosylation site (N-linked (GlcNAc...) asparagine).

Belongs to the tectonic family. As to quaternary structure, part of the tectonic-like complex (also named B9 complex).

It is found in the cytoplasm. Its subcellular location is the cytoskeleton. The protein localises to the cilium basal body. It localises to the secreted. In terms of biological role, component of the tectonic-like complex, a complex localized at the transition zone of primary cilia and acting as a barrier that prevents diffusion of transmembrane proteins between the cilia and plasma membranes. Regulator of Hedgehog (Hh), required for both activation and inhibition of the Hh pathway in the patterning of the neural tube. During neural tube development, it is required for formation of the most ventral cell types and for full Hh pathway activation. Functions in Hh signal transduction to fully activate the pathway in the presence of high Hh levels and to repress the pathway in the absence of Hh signals. Modulates Hh signal transduction downstream of SMO and RAB23. The sequence is that of Tectonic-1 (Tctn1) from Mus musculus (Mouse).